The chain runs to 183 residues: SsrA-binding protein (183 aa).

The interval 1-27 is disordered; the sequence is MAKKATLVDHGAAKGKKKAQSKVSKKN. A compositionally biased stretch (basic residues) spans 13-27; sequence AKGKKKAQSKVSKKN.

This sequence belongs to the SmpB family.

The protein localises to the cytoplasm. Required for rescue of stalled ribosomes mediated by trans-translation. Binds to transfer-messenger RNA (tmRNA), required for stable association of tmRNA with ribosomes. tmRNA and SmpB together mimic tRNA shape, replacing the anticodon stem-loop with SmpB. tmRNA is encoded by the ssrA gene; the 2 termini fold to resemble tRNA(Ala) and it encodes a 'tag peptide', a short internal open reading frame. During trans-translation Ala-aminoacylated tmRNA acts like a tRNA, entering the A-site of stalled ribosomes, displacing the stalled mRNA. The ribosome then switches to translate the ORF on the tmRNA; the nascent peptide is terminated with the 'tag peptide' encoded by the tmRNA and targeted for degradation. The ribosome is freed to recommence translation, which seems to be the essential function of trans-translation. The sequence is that of SsrA-binding protein from Corynebacterium kroppenstedtii (strain DSM 44385 / JCM 11950 / CIP 105744 / CCUG 35717).